A 367-amino-acid chain; its full sequence is Peptide chain release factor 2 (367 aa).

Gln254 carries the post-translational modification N5-methylglutamine.

This sequence belongs to the prokaryotic/mitochondrial release factor family. Post-translationally, methylated by PrmC. Methylation increases the termination efficiency of RF2.

The protein localises to the cytoplasm. Its function is as follows. Peptide chain release factor 2 directs the termination of translation in response to the peptide chain termination codons UGA and UAA. The chain is Peptide chain release factor 2 from Aromatoleum aromaticum (strain DSM 19018 / LMG 30748 / EbN1) (Azoarcus sp. (strain EbN1)).